The primary structure comprises 198 residues: TM2 domain-containing protein 2 (198 aa).

A signal peptide spans 1–27 (MRWPVPPLGYLLLGGQGLLLTFSLISS). Residues 28-128 (QNNTSPVTYP…FLRGNRPCIK (101 aa)) are Extracellular-facing. 3 N-linked (GlcNAc...) asparagine glycosylation sites follow: Asn-29, Asn-40, and Asn-76. Residues 129–149 (YTGHYFITTLLYSFFLGCFGV) form a helical membrane-spanning segment. Positions 131–179 (GHYFITTLLYSFFLGCFGVDRFCLGHTGTAVGKLLTWGGLGIWWFVDLI) constitute a TM2 domain. Residues 150–166 (DRFCLGHTGTAVGKLLT) lie on the Cytoplasmic side of the membrane. A helical membrane pass occupies residues 167 to 187 (WGGLGIWWFVDLILLITGGLM). Over 188-198 (PSDNSNWCTIY) the chain is Extracellular.

This sequence belongs to the TM2 family.

The protein localises to the membrane. In Xenopus laevis (African clawed frog), this protein is TM2 domain-containing protein 2 (tm2d2).